The primary structure comprises 173 residues: Crossover junction endodeoxyribonuclease RuvC (173 aa).

Active-site residues include Asp8, Glu67, and Asp139. Residues Asp8, Glu67, and Asp139 each coordinate Mg(2+).

Belongs to the RuvC family. As to quaternary structure, homodimer which binds Holliday junction (HJ) DNA. The HJ becomes 2-fold symmetrical on binding to RuvC with unstacked arms; it has a different conformation from HJ DNA in complex with RuvA. In the full resolvosome a probable DNA-RuvA(4)-RuvB(12)-RuvC(2) complex forms which resolves the HJ. The cofactor is Mg(2+).

The protein localises to the cytoplasm. It carries out the reaction Endonucleolytic cleavage at a junction such as a reciprocal single-stranded crossover between two homologous DNA duplexes (Holliday junction).. Its function is as follows. The RuvA-RuvB-RuvC complex processes Holliday junction (HJ) DNA during genetic recombination and DNA repair. Endonuclease that resolves HJ intermediates. Cleaves cruciform DNA by making single-stranded nicks across the HJ at symmetrical positions within the homologous arms, yielding a 5'-phosphate and a 3'-hydroxyl group; requires a central core of homology in the junction. The consensus cleavage sequence is 5'-(A/T)TT(C/G)-3'. Cleavage occurs on the 3'-side of the TT dinucleotide at the point of strand exchange. HJ branch migration catalyzed by RuvA-RuvB allows RuvC to scan DNA until it finds its consensus sequence, where it cleaves and resolves the cruciform DNA. This chain is Crossover junction endodeoxyribonuclease RuvC, found in Cronobacter sakazakii (strain ATCC BAA-894) (Enterobacter sakazakii).